Reading from the N-terminus, the 94-residue chain is C-C motif chemokine 17 (94 aa).

Residues 1–23 form the signal peptide; it reads MAPLKMLALVILLLGASLQHIHA. Disulfide bonds link Cys-33/Cys-57 and Cys-34/Cys-73.

It belongs to the intercrine beta (chemokine CC) family.

It is found in the secreted. Functionally, chemokine, which displays chemotactic activity for T lymphocytes, preferentially Th2 cells, but not monocytes or granulocytes. Therefore plays an important role in a wide range of inflammatory and immunological processes. Acts by binding to CCR4 at T-cell surface. Mediates GM-CSF/CSF2-driven pain and inflammation. In the brain, required to maintain the typical, highly branched morphology of hippocampal microglia under homeostatic conditions. May be important for the appropriate adaptation of microglial morphology and synaptic plasticity to acute lipopolysaccharide (LPS)-induced neuroinflammation. Plays a role in wound healing, mainly by inducing fibroblast migration into the wound. The sequence is that of C-C motif chemokine 17 (CCL17) from Macaca mulatta (Rhesus macaque).